The primary structure comprises 81 residues: Photosystem I iron-sulfur center (81 aa).

4Fe-4S ferredoxin-type domains follow at residues 2–31 (SHSV…MIPW) and 39–68 (IASA…VRVY). Residues C11, C14, C17, C21, C48, C51, C54, and C58 each coordinate [4Fe-4S] cluster.

As to quaternary structure, the eukaryotic PSI reaction center is composed of at least 11 subunits. [4Fe-4S] cluster is required as a cofactor.

The protein localises to the plastid. It is found in the chloroplast thylakoid membrane. It catalyses the reaction reduced [plastocyanin] + hnu + oxidized [2Fe-2S]-[ferredoxin] = oxidized [plastocyanin] + reduced [2Fe-2S]-[ferredoxin]. Functionally, apoprotein for the two 4Fe-4S centers FA and FB of photosystem I (PSI); essential for photochemical activity. FB is the terminal electron acceptor of PSI, donating electrons to ferredoxin. The C-terminus interacts with PsaA/B/D and helps assemble the protein into the PSI complex. Required for binding of PsaD and PsaE to PSI. PSI is a plastocyanin-ferredoxin oxidoreductase, converting photonic excitation into a charge separation, which transfers an electron from the donor P700 chlorophyll pair to the spectroscopically characterized acceptors A0, A1, FX, FA and FB in turn. This chain is Photosystem I iron-sulfur center, found in Phalaenopsis aphrodite subsp. formosana (Moth orchid).